Reading from the N-terminus, the 103-residue chain is Large ribosomal subunit protein uL24 (103 aa).

This sequence belongs to the universal ribosomal protein uL24 family. In terms of assembly, part of the 50S ribosomal subunit.

In terms of biological role, one of two assembly initiator proteins, it binds directly to the 5'-end of the 23S rRNA, where it nucleates assembly of the 50S subunit. One of the proteins that surrounds the polypeptide exit tunnel on the outside of the subunit. The polypeptide is Large ribosomal subunit protein uL24 (Haemophilus influenzae (strain 86-028NP)).